Here is a 570-residue protein sequence, read N- to C-terminus: Proline--tRNA ligase (570 aa).

This sequence belongs to the class-II aminoacyl-tRNA synthetase family. ProS type 1 subfamily. In terms of assembly, homodimer.

Its subcellular location is the cytoplasm. It carries out the reaction tRNA(Pro) + L-proline + ATP = L-prolyl-tRNA(Pro) + AMP + diphosphate. Its function is as follows. Catalyzes the attachment of proline to tRNA(Pro) in a two-step reaction: proline is first activated by ATP to form Pro-AMP and then transferred to the acceptor end of tRNA(Pro). As ProRS can inadvertently accommodate and process non-cognate amino acids such as alanine and cysteine, to avoid such errors it has two additional distinct editing activities against alanine. One activity is designated as 'pretransfer' editing and involves the tRNA(Pro)-independent hydrolysis of activated Ala-AMP. The other activity is designated 'posttransfer' editing and involves deacylation of mischarged Ala-tRNA(Pro). The misacylated Cys-tRNA(Pro) is not edited by ProRS. In Aquifex aeolicus (strain VF5), this protein is Proline--tRNA ligase (proS).